Here is a 240-residue protein sequence, read N- to C-terminus: Urease accessory protein UreF (240 aa).

It belongs to the UreF family. As to quaternary structure, ureD, UreF and UreG form a complex that acts as a GTP-hydrolysis-dependent molecular chaperone, activating the urease apoprotein by helping to assemble the nickel containing metallocenter of UreC. The UreE protein probably delivers the nickel.

It localises to the cytoplasm. Functionally, required for maturation of urease via the functional incorporation of the urease nickel metallocenter. The polypeptide is Urease accessory protein UreF (Bradyrhizobium sp. (strain ORS 278)).